The chain runs to 225 residues: UPF0758 protein Shew_3481 (225 aa).

Residues 102-224 (ILSDPDLTRD…IVSFAERGWI (123 aa)) enclose the MPN domain. Residues His-173, His-175, and Asp-186 each contribute to the Zn(2+) site. A JAMM motif motif is present at residues 173-186 (HNHPSGGAEPSHAD).

Belongs to the UPF0758 family.

This is UPF0758 protein Shew_3481 from Shewanella loihica (strain ATCC BAA-1088 / PV-4).